The chain runs to 123 residues: Cysteine-rich DPF motif domain-containing protein 1 (123 aa).

The segment at 102-123 is disordered; the sequence is RQDLEKRKAPSKRTPSQPGSRT. Residues 114 to 123 are compositionally biased toward polar residues; that stretch reads RTPSQPGSRT.

Belongs to the CDPF1 family.

In Homo sapiens (Human), this protein is Cysteine-rich DPF motif domain-containing protein 1 (CDPF1).